The primary structure comprises 397 residues: CCA-adding enzyme (397 aa).

Gly-26 and Arg-29 together coordinate ATP. CTP contacts are provided by Gly-26 and Arg-29. Mg(2+) contacts are provided by Asp-39 and Asp-41. ATP-binding residues include Arg-110, Asp-153, Arg-156, Arg-159, and Arg-162. Residues Arg-110, Asp-153, Arg-156, Arg-159, and Arg-162 each contribute to the CTP site.

It belongs to the tRNA nucleotidyltransferase/poly(A) polymerase family. Bacterial CCA-adding enzyme type 3 subfamily. Homodimer. It depends on Mg(2+) as a cofactor.

The enzyme catalyses a tRNA precursor + 2 CTP + ATP = a tRNA with a 3' CCA end + 3 diphosphate. It carries out the reaction a tRNA with a 3' CCA end + 2 CTP + ATP = a tRNA with a 3' CCACCA end + 3 diphosphate. Its function is as follows. Catalyzes the addition and repair of the essential 3'-terminal CCA sequence in tRNAs without using a nucleic acid template. Adds these three nucleotides in the order of C, C, and A to the tRNA nucleotide-73, using CTP and ATP as substrates and producing inorganic pyrophosphate. tRNA 3'-terminal CCA addition is required both for tRNA processing and repair. Also involved in tRNA surveillance by mediating tandem CCA addition to generate a CCACCA at the 3' terminus of unstable tRNAs. While stable tRNAs receive only 3'-terminal CCA, unstable tRNAs are marked with CCACCA and rapidly degraded. The sequence is that of CCA-adding enzyme from Bacillus cereus (strain 03BB102).